A 482-amino-acid chain; its full sequence is Lipoamide acyltransferase component of branched-chain alpha-keto acid dehydrogenase complex, mitochondrial (482 aa).

Residues 1–61 (MAAALVLRTW…QWLKTTAALQ (61 aa)) constitute a mitochondrion transit peptide. Positions 64 to 139 (IVQFKLSDIG…YVGKPLVDIE (76 aa)) constitute a Lipoyl-binding domain. At Lys105 the chain carries N6-lipoyllysine. Lys133 is subject to N6-succinyllysine. The tract at residues 145-160 (DSEEDVVETPAVSHDE) is critical for association with PPM1K. The segment at 146–171 (SEEDVVETPAVSHDEHTHQEIKGQKT) is disordered. Residues 157–168 (SHDEHTHQEIKG) show a composition bias toward basic and acidic residues. A Peripheral subunit-binding (PSBD) domain is found at 172 to 209 (LATPAVRRLAMENNIKLSEVIGSGKDGRILKEDILNYL). An N6-acetyllysine; alternate modification is found at Lys196. Lys196 carries the N6-succinyllysine; alternate modification. Lys202 is modified (N6-acetyllysine). Over residues 218–230 (PPSPKAEIMPPPP) the composition is skewed to pro residues. A disordered region spans residues 218-238 (PPSPKAEIMPPPPKPKDRTIP). Ser220 carries the phosphoserine modification. 2 positions are modified to N6-acetyllysine: Lys243 and Lys250. Position 261 is an N6-succinyllysine (Lys261). Lys289 is modified (N6-acetyllysine; alternate). N6-succinyllysine; alternate is present on Lys289. A CoA-binding site is contributed by Arg291. N6-acetyllysine is present on residues Lys295 and Lys304. Residues Ser306, Asp349, Gln378, Ser399, Asn400, Ser403, Gly424, and Ile426 each contribute to the CoA site. N6-acetyllysine is present on Lys435. Residue Lys440 is modified to N6-acetyllysine; alternate. Lys440 carries the post-translational modification N6-succinyllysine; alternate. Active-site residues include His452 and Asp456.

The protein belongs to the 2-oxoacid dehydrogenase family. As to quaternary structure, forms a 24-polypeptide structural core with octahedral symmetry that represents the E2 component of the branched-chain alpha-ketoacid dehydrogenase (BCKDH) complex. The BCKDH complex is composed of three major building blocks E1, E2 and E3. It is organized around E2, a 24-meric cubic core composed of DBT, to which are associated 6 to 12 copies of E1, and approximately 6 copies of the dehydrogenase E3, a DLD dimer. Interacts with PPM1K with a 24:1 stoichiometry; the N-terminal region (residues 49-61) of PPM1K and C-terminal linker of the lipoyl domain of DBT/E2 (residues 145-160) are critical for this interaction whereas the lipoyl prosthetic group is dispensable. This interaction requires colocalization in mitochondria. PPM1K competes with BCKDK for binding to DBT; this interaction is modulated by branched-chain alpha-keto acids (BCKAs). At steady state, BCKDH holoenzyme preferentially binds BCKDK and BCKDHA is phosphorylated. In response to high levels of BCKAs, BCKDK is replaced by PPM1K leading to BCKDHA dephosphorylation. (R)-lipoate serves as cofactor. As to expression, expressed in kidney (at protein level).

It is found in the mitochondrion matrix. It carries out the reaction N(6)-[(R)-dihydrolipoyl]-L-lysyl-[protein] + 2-methylpropanoyl-CoA = N(6)-[(R)-S(8)-2-methylpropanoyldihydrolipoyl]-L-lysyl-[protein] + CoA. The branched-chain alpha-keto dehydrogenase complex catalyzes the overall conversion of alpha-keto acids to acyl-CoA and CO(2). It contains multiple copies of three enzymatic components: branched-chain alpha-keto acid decarboxylase (E1), lipoamide acyltransferase (E2) and lipoamide dehydrogenase (E3). Within this complex, the catalytic function of this enzyme is to accept, and to transfer to coenzyme A, acyl groups that are generated by the branched-chain alpha-keto acid decarboxylase component. The chain is Lipoamide acyltransferase component of branched-chain alpha-keto acid dehydrogenase complex, mitochondrial (DBT) from Bos taurus (Bovine).